Here is a 407-residue protein sequence, read N- to C-terminus: Phosphopentomutase (407 aa).

Mn(2+) contacts are provided by Asp11, Asp305, His310, Asp346, His347, and His358.

This sequence belongs to the phosphopentomutase family. It depends on Mn(2+) as a cofactor.

The protein resides in the cytoplasm. The catalysed reaction is 2-deoxy-alpha-D-ribose 1-phosphate = 2-deoxy-D-ribose 5-phosphate. It carries out the reaction alpha-D-ribose 1-phosphate = D-ribose 5-phosphate. It functions in the pathway carbohydrate degradation; 2-deoxy-D-ribose 1-phosphate degradation; D-glyceraldehyde 3-phosphate and acetaldehyde from 2-deoxy-alpha-D-ribose 1-phosphate: step 1/2. Its function is as follows. Isomerase that catalyzes the conversion of deoxy-ribose 1-phosphate (dRib-1-P) and ribose 1-phosphate (Rib-1-P) to deoxy-ribose 5-phosphate (dRib-5-P) and ribose 5-phosphate (Rib-5-P), respectively. In Legionella pneumophila (strain Lens), this protein is Phosphopentomutase.